The sequence spans 198 residues: Fimbriae W protein (198 aa).

The 66-residue stretch at 127–192 (HYCTTRHFSV…QFLKYIRVNL (66 aa)) folds into the HTH luxR-type domain.

The protein localises to the fimbrium. This is Fimbriae W protein (fimW) from Salmonella typhimurium (strain LT2 / SGSC1412 / ATCC 700720).